The primary structure comprises 87 residues: Large ribosomal subunit protein bL31B (87 aa).

The protein belongs to the bacterial ribosomal protein bL31 family. Type B subfamily. Part of the 50S ribosomal subunit.

This is Large ribosomal subunit protein bL31B from Burkholderia vietnamiensis (strain G4 / LMG 22486) (Burkholderia cepacia (strain R1808)).